Consider the following 318-residue polypeptide: L-lactate dehydrogenase (318 aa).

NAD(+)-binding positions include Val18, Asp39, Lys44, Tyr69, and 83-84 (GA). The substrate site is built by Gln86 and Arg92. Residues Ser105, 122-124 (VSN), and Ser147 each bind NAD(+). 124 to 127 (NPVD) is a binding site for substrate. Residue 152–155 (DTSR) coordinates substrate. The Proton acceptor role is filled by His179. Residue Tyr225 is modified to Phosphotyrosine. Thr234 contributes to the substrate binding site.

Belongs to the LDH/MDH superfamily. LDH family. Homotetramer.

The protein resides in the cytoplasm. The enzyme catalyses (S)-lactate + NAD(+) = pyruvate + NADH + H(+). It functions in the pathway fermentation; pyruvate fermentation to lactate; (S)-lactate from pyruvate: step 1/1. In terms of biological role, catalyzes the conversion of lactate to pyruvate. The protein is L-lactate dehydrogenase of Clostridium botulinum (strain ATCC 19397 / Type A).